Consider the following 333-residue polypeptide: Ornithine carbamoyltransferase (333 aa).

Carbamoyl phosphate-binding positions include 56–59 (STRT), arginine 107, and 134–137 (HPTQ). L-ornithine-binding positions include asparagine 167, aspartate 231, and 235-236 (SM). Residues 273-274 (CL) and arginine 318 contribute to the carbamoyl phosphate site.

The protein belongs to the aspartate/ornithine carbamoyltransferase superfamily. OTCase family.

The protein resides in the cytoplasm. It carries out the reaction carbamoyl phosphate + L-ornithine = L-citrulline + phosphate + H(+). The protein operates within amino-acid degradation; L-arginine degradation via ADI pathway; carbamoyl phosphate from L-arginine: step 2/2. Its function is as follows. Reversibly catalyzes the transfer of the carbamoyl group from carbamoyl phosphate (CP) to the N(epsilon) atom of ornithine (ORN) to produce L-citrulline. This Clostridium botulinum (strain 657 / Type Ba4) protein is Ornithine carbamoyltransferase.